Here is an 847-residue protein sequence, read N- to C-terminus: Matrin-3 (847 aa).

Residue Ser-2 is modified to N-acetylserine. At Lys-3 the chain carries N6-acetyllysine; alternate. Residue Lys-3 forms a Glycyl lysine isopeptide (Lys-Gly) (interchain with G-Cter in SUMO2); alternate linkage. A phosphoserine mark is found at Ser-4, Ser-9, Ser-11, Ser-14, Ser-22, Ser-41, Ser-118, and Ser-126. Glycyl lysine isopeptide (Lys-Gly) (interchain with G-Cter in SUMO2) cross-links involve residues Lys-132 and Lys-146. Disordered regions lie at residues 146-174 (KRRRTEEGPTLSYGRDGRSATREPPYRVP) and 187-214 (DSFDDRGPSLNPVLDYDHGSRSQESGYY). Position 150 is a phosphothreonine (Thr-150). Residue Ser-157 is modified to Phosphoserine. A Phosphotyrosine modification is found at Tyr-158. A compositionally biased stretch (basic and acidic residues) spans 160–174 (RDGRSATREPPYRVP). Ser-164, Ser-188, and Ser-195 each carry phosphoserine. Over residues 201-214 (DYDHGSRSQESGYY) the composition is skewed to basic and acidic residues. Position 202 is a phosphotyrosine (Tyr-202). Phosphoserine is present on residues Ser-206, Ser-208, and Ser-211. Phosphotyrosine is present on Tyr-219. The residue at position 234 (Ser-234) is a Phosphoserine. A Glycyl lysine isopeptide (Lys-Gly) (interchain with G-Cter in SUMO2) cross-link involves residue Lys-245. Ser-264 carries the phosphoserine modification. Lys-269 is covalently cross-linked (Glycyl lysine isopeptide (Lys-Gly) (interchain with G-Cter in SUMO2)). At Ser-275 the chain carries Phosphoserine. Residues 342–394 (PFMLQQSTNPAPGILGPPPPSFHLGGPAVGPRGNLGAGNGNLQGPRHMQKGRV) form a disordered region. The region spanning 398–473 (RVVHIMDFQR…KPVRVHLSQK (76 aa)) is the RRM 1 domain. Residues Lys-478, Lys-487, and Lys-491 each participate in a glycyl lysine isopeptide (Lys-Gly) (interchain with G-Cter in SUMO2) cross-link. One can recognise an RRM 2 domain in the interval 496–571 (RVIHLSNLPH…RCVKVDLSEK (76 aa)). A phosphoserine mark is found at Ser-509 and Ser-511. Lys-515 is covalently cross-linked (Glycyl lysine isopeptide (Lys-Gly) (interchain with G-Cter in SUMO2)). N6-acetyllysine; alternate is present on Lys-522. Residue Lys-522 forms a Glycyl lysine isopeptide (Lys-Gly) (interchain with G-Cter in SUMO2); alternate linkage. Ser-533 is modified (phosphoserine). Glycyl lysine isopeptide (Lys-Gly) (interchain with G-Cter in SUMO2) cross-links involve residues Lys-554 and Lys-555. Lys-571 carries the post-translational modification N6-acetyllysine. The tract at residues 588–786 (KKDKSRKRSY…DEYRIGPYQP (199 aa)) is disordered. Ser-596, Ser-598, Ser-604, and Ser-606 each carry phosphoserine. The span at 600–643 (DGKESPSDKKSKTDGSQKTESSTEGKEQEEKSGEDGEKDTKDDQ) shows a compositional bias: basic and acidic residues. Glycyl lysine isopeptide (Lys-Gly) (interchain with G-Cter in SUMO2) cross-links involve residues Lys-617 and Lys-630. Positions 653 to 665 (ESEDELLVDEEEA) are enriched in acidic residues. Phosphoserine is present on residues Ser-654, Ser-671, Ser-673, and Ser-674. Low complexity predominate over residues 666 to 676 (AALLESGSSVG). Residue Thr-679 is modified to Phosphothreonine. Residue Ser-689 is modified to Phosphoserine. The span at 689–704 (SDGKKEPSDKAVKKDG) shows a compositional bias: basic and acidic residues. Residues 710–718 (AKKKLKKVD) carry the Nuclear localization signal motif. Glycyl lysine isopeptide (Lys-Gly) (interchain with G-Cter in SUMO2) cross-links involve residues Lys-719 and Lys-736. A Phosphothreonine modification is found at Thr-741. Phosphoserine is present on residues Ser-747, Ser-759, and Ser-766. The segment covering 767–780 (DENKDDYTIPDEYR) has biased composition (basic and acidic residues). A Glycyl lysine isopeptide (Lys-Gly) (interchain with G-Cter in SUMO2) cross-link involves residue Lys-770. The Matrin-type zinc finger occupies 801–832 (FYCKLCSLFYTNEEVAKNTHCSSLPHYQKLKK). Lys-836 carries the post-translational modification N6-acetyllysine; alternate. Residue Lys-836 forms a Glycyl lysine isopeptide (Lys-Gly) (interchain with G-Cter in SUMO2); alternate linkage.

In terms of assembly, part of a complex consisting of SFPQ, NONO and MATR3. Interacts with AGO1 and AGO2. Part of a complex composed at least of ASH2L, EMSY, HCFC1, HSPA8, CCAR2, MATR3, MKI67, RBBP5, TUBB2A, WDR5 and ZNF335; this complex may have a histone H3-specific methyltransferase activity. Interacts with TARDBP. Part of the HDP-RNP complex composed of at least HEXIM1, PRKDC, XRCC5, XRCC6, paraspeckle proteins (SFPQ, NONO, PSPC1, RBM14, and MATR3) and NEAT1 RNA. Interacts with FUS. Interacts with IGF2BP1; the interaction is enhanced by SEPIN14P20 peptide RBPR. Interacts with IGF2BP2 and IGF2BP3. Interacts with RBPMS.

It localises to the nucleus matrix. Functionally, may play a role in transcription or may interact with other nuclear matrix proteins to form the internal fibrogranular network. In association with the SFPQ-NONO heteromer may play a role in nuclear retention of defective RNAs. Plays a role in the regulation of DNA virus-mediated innate immune response by assembling into the HDP-RNP complex, a complex that serves as a platform for IRF3 phosphorylation and subsequent innate immune response activation through the cGAS-STING pathway. Binds to N6-methyladenosine (m6A)-containing mRNAs and contributes to MYC stability by binding to m6A-containing MYC mRNAs. May bind to specific miRNA hairpins. This chain is Matrin-3 (MATR3), found in Homo sapiens (Human).